Reading from the N-terminus, the 521-residue chain is D-aminoacyl-tRNA deacylase (521 aa).

Disordered stretches follow at residues 323 to 353 (AVGTVHTKDSTDIDTGTNHNVDAERTESEDS) and 499 to 521 (VFSTSSSSSSSSSSSSSSSSSSS). Residues 343–353 (VDAERTESEDS) show a composition bias toward basic and acidic residues. Residues 501 to 521 (STSSSSSSSSSSSSSSSSSSS) show a composition bias toward low complexity.

This sequence belongs to the DtdA deacylase family. As to quaternary structure, monomer. It depends on Zn(2+) as a cofactor.

The enzyme catalyses a D-aminoacyl-tRNA + H2O = a tRNA + a D-alpha-amino acid + H(+). It carries out the reaction glycyl-tRNA(Ala) + H2O = tRNA(Ala) + glycine + H(+). In terms of biological role, D-aminoacyl-tRNA deacylase with broad substrate specificity. By recycling D-aminoacyl-tRNA to D-amino acids and free tRNA molecules, this enzyme counteracts the toxicity associated with the formation of D-aminoacyl-tRNA entities in vivo. In Haloquadratum walsbyi (strain DSM 16790 / HBSQ001), this protein is D-aminoacyl-tRNA deacylase.